We begin with the raw amino-acid sequence, 227 residues long: Ribose-5-phosphate isomerase A (227 aa).

Substrate contacts are provided by residues 26–29 (TGST), 82–85 (DGAD), and 95–98 (KGGG). Catalysis depends on Glu-104, which acts as the Proton acceptor. Substrate is bound at residue Lys-122.

The protein belongs to the ribose 5-phosphate isomerase family. As to quaternary structure, homodimer.

It carries out the reaction aldehydo-D-ribose 5-phosphate = D-ribulose 5-phosphate. The protein operates within carbohydrate degradation; pentose phosphate pathway; D-ribose 5-phosphate from D-ribulose 5-phosphate (non-oxidative stage): step 1/1. Catalyzes the reversible conversion of ribose-5-phosphate to ribulose 5-phosphate. The sequence is that of Ribose-5-phosphate isomerase A from Streptococcus pyogenes serotype M28 (strain MGAS6180).